The chain runs to 240 residues: tRNA1(Val) (adenine(37)-N6)-methyltransferase (240 aa).

It belongs to the methyltransferase superfamily. tRNA (adenine-N(6)-)-methyltransferase family.

Its subcellular location is the cytoplasm. The enzyme catalyses adenosine(37) in tRNA1(Val) + S-adenosyl-L-methionine = N(6)-methyladenosine(37) in tRNA1(Val) + S-adenosyl-L-homocysteine + H(+). Functionally, specifically methylates the adenine in position 37 of tRNA(1)(Val) (anticodon cmo5UAC). The sequence is that of tRNA1(Val) (adenine(37)-N6)-methyltransferase from Christiangramia forsetii (strain DSM 17595 / CGMCC 1.15422 / KT0803) (Gramella forsetii).